The chain runs to 1503 residues: Transient receptor potential cation channel subfamily M member 2 (1503 aa).

The interval 1–20 (MEPSALRKAGSEQEEGFEGL) is disordered. Residues 1–752 (MEPSALRKAG…WWGQLSVDNG (752 aa)) lie on the Cytoplasmic side of the membrane. Thr174, Asn179, Arg302, Gly333, and Thr336 together coordinate ADP-D-ribose. Position 740 is a phosphothreonine (Thr740). An intramembrane segment occupies 753-769 (LWRVTLCMLAFPLLLTG). The Cytoplasmic portion of the chain corresponds to 770-795 (LISFREKRLQDVGTPAARARAFFTAP). Residues 796–816 (VVVFHLNILSYFAFLCLFAYV) form a helical membrane-spanning segment. The Extracellular segment spans residues 817–827 (LMVDFQPVPSW). Residues 828–848 (CECAIYLWLFSLVCEEMRQLF) form a helical membrane-spanning segment. Residues Glu843 and Gln846 each coordinate Ca(2+). The Cytoplasmic segment spans residues 849 to 867 (YDPDECGLMKKAALYFSDF). The chain crosses the membrane as a helical span at residues 868-888 (WNKLDVGAILLFVAGLTCRLI). A Ca(2+)-binding site is contributed by Asn869. The Extracellular segment spans residues 889-896 (PATLYPGR). Residues 897–917 (VILSLDFILFCLRLMHIFTIS) traverse the membrane as a helical segment. The Cytoplasmic segment spans residues 918 to 929 (KTLGPKIIIVKR). Residues 930–950 (MMKDVFFFLFLLAVWVVSFGV) traverse the membrane as a helical segment. Over 951-970 (AKQAILIHNERRVDWLFRGA) the chain is Extracellular. The pore-forming intramembrane region spans 971–985 (VYHSYLTIFGQIPGY). Positions 979–982 (FGQI) match the Selectivity filter motif. Over 986-1022 (IDGVNFNPEHCSPNGTDPYKPKCPESDATQQRPAFPE) the chain is Extracellular. Cys996 and Cys1008 are oxidised to a cystine. A helical transmembrane segment spans residues 1023-1044 (WLTVLLLCLYLLFTNILLLNLL). Residues 1045–1079 (IAMFNYTFQQVQEHTDQIWKFQRHDLIEEYHGRPA) are Cytoplasmic-facing. Glu1073 is a Ca(2+) binding site. An intramembrane segment occupies 1080-1098 (APPPFILLSHLQLFIKRVV). At 1099–1503 (LKTPAKRHKQ…KAAAEFGAHY (405 aa)) the chain is on the cytoplasmic side. The interval 1206-1237 (EADVPTLASQKAAEEPDAEPGGRKKTEEPGDS) is disordered. In terms of domain architecture, Nudix hydrolase spans 1354–1498 (RWRRNEDGAI…KTLLQKAAAE (145 aa)). ADP-D-ribose is bound by residues Leu1381 and Ser1382. The Nudix box signature appears at 1390 to 1411 (GSREPGEMLPRKLKRILRQEHW). ADP-D-ribose-binding residues include Asp1431, Arg1433, Tyr1485, and Asn1487.

Belongs to the transient receptor (TC 1.A.4) family. LTrpC subfamily. TRPM2 sub-subfamily. As to quaternary structure, homotetramer. Isoform 1 can interact with isoform 3. This interaction decreases Ca(2+) influx through isoform 1 and suppresses susceptibility to oxidative stress-induced cell death. In terms of processing, phosphorylation of TRPM2 at Thr-740 by protein kinase C (PKC) counteracts the effect of cytosolic Ca(2+) and elevates the temperature threshold. In terms of tissue distribution, highly expressed in brain and peripheral blood cells, such as neutrophils. Also detected in bone marrow, spleen, heart, liver and lung. Isoform 2 is found in neutrophil granulocytes.

The protein localises to the cell membrane. The protein resides in the perikaryon. Its subcellular location is the cell projection. It localises to the cytoplasmic vesicle. It is found in the lysosome. The catalysed reaction is Ca(2+)(in) = Ca(2+)(out). It carries out the reaction Na(+)(in) = Na(+)(out). Its activity is regulated as follows. Activated by intracellular ADP-ribose, beta-NAD (NAD(+)) and similar compounds, and by oxidative stress caused by reactive oxygen or nitrogen species. Ca(2+) and PI(4,5)P2 are required for channel opening by ADP-ribose. Activation by ADP-ribose and beta-NAD is strongly increased by moderate heat (35 to 40 degrees Celsius). Likewise, reactive oxygen species lower the threshold for activation by moderate heat (37 degrees Celsius). Activated by moderate heat (35 to 40 degrees Celsius). Inactivated by exposure to extracellular pH between 4.0 and 6.5; irreversibly inactivated when open channels are exposed to extracellular pH between 4.0 and 6.5, while pre-exposure of closed channels to extracellular pH 5.5 gives rise to currents that rapidly inactivate, but protects against irreversible inactivation. Inactivated by intracellular ATP. Activated by arachidonic acid. Inhibited by 2-aminoethyl diphenylborinate (2-APB). Its function is as follows. Nonselective, voltage-independent cation channel that mediates Na(+) and Ca(2+) influx, leading to increased cytoplasmic Ca(2+) levels. Functions as a ligand-gated ion channel, gated by intracellular adenosine diphosphate ribose (ADP-ribose), Ca(2+), warm temperature, and oxidative stress. The precise physiological activators are under debate; the true, physiological activators may be ADP-ribose and ADP-ribose-2'-phosphate. Binding of ADP-ribose to the cytoplasmic Nudix domain causes a conformation change; the channel is primed but still requires Ca(2+) binding to trigger channel opening. Extracellular Ca(2+) passes through the channel and increases channel activity. Contributes to Ca(2+) release from intracellular stores in response to ADP-ribose. Plays a role in numerous processes that involve signaling via intracellular Ca(2+) levels. Besides, mediates the release of lysosomal Zn(2+) stores in response to reactive oxygen species, leading to increased cytosolic Zn(2+) levels. Plays a role in mediating behavorial and physiological responses to moderate heat and thereby contributes to body temperature homeostasis. Plays a role in insulin secretion, a process that requires increased cytoplasmic Ca(2+) levels. Required for normal IFNG and cytokine secretion and normal innate immune immunity in response to bacterial infection. Required for normal phagocytosis and cytokine release by macrophages exposed to zymosan (in vitro). Plays a role in dendritic cell differentiation and maturation, and in dendritic cell chemotaxis via its role in regulating cytoplasmic Ca(2+) levels. Plays a role in the regulation of the reorganization of the actin cytoskeleton and filopodia formation in response to reactive oxygen species via its role in increasing cytoplasmic Ca(2+) and Zn(2+) levels. Confers susceptibility to cell death following oxidative stress. Functionally, lacks cation channel activity. Does not mediate cation transport in response to oxidative stress or ADP-ribose. Lacks cation channel activity and negatively regulates the channel activity of isoform 1. Negatively regulates susceptibility to cell death in reposponse to oxidative stress. The protein is Transient receptor potential cation channel subfamily M member 2 (TRPM2) of Homo sapiens (Human).